The sequence spans 96 residues: uncharacterized protein (96 aa).

This is an uncharacterized protein from Saimiriine herpesvirus 2 (strain 11) (SaHV-2).